The primary structure comprises 615 residues: Ras association domain-containing protein 1 homolog (615 aa).

Disordered regions lie at residues 1-29 (MLRSVVNNNDKAKESEQSVRVATDDPTYQ) and 69-89 (SDDEKMETSSTSSPQSEQSIG). Residues 76 to 87 (TSSTSSPQSEQS) are compositionally biased toward low complexity. The Phorbol-ester/DAG-type zinc finger occupies 164–214 (NHSFKTHSLLHPTWCDKCGDFIWGILKEALKCEHCNYTCHARCRDLVTLDC). The interval 249–268 (PAMSSSTGSDKENGNGNSAG) is disordered. The span at 251 to 268 (MSSSTGSDKENGNGNSAG) shows a compositional bias: polar residues. One can recognise a Ras-associating domain in the interval 396-496 (KTTSLRTITS…RALVLQENDT (101 aa)). The 48-residue stretch at 498–545 (DILWDAFEIPELENFLRILGMEEKQYVFQTQQKYQQYRYHLDAELRQR) folds into the SARAH domain.

As to quaternary structure, interacts with rab-39 (GTP-bound form). Interacts (via SARAH domain) with cst-1; the interaction is required for the phosphorylation of cst-1. As to expression, expressed in the pharynx, epithelial cells, ciliated neurons in the head, body wall muscles, hypodermis, vulva, gonadal sheath cells, tail hypodermis and in coelomocytes. Expressed in the pharynx, neurons and vulva.

Its subcellular location is the cytoplasm. It localises to the cytoskeleton. Functionally, involved in embryonic morphogenesis. Plays a role in the organization of apical filamentous actin in epithelial cells of the developing embryo. May play a role in let-60-mediated vulval development. May induce nuclear condensation. Positively regulates the oxidative stress response, and this may be in association with the small GTPase rab-39. Not required for muscle integrity. This Caenorhabditis elegans protein is Ras association domain-containing protein 1 homolog.